We begin with the raw amino-acid sequence, 270 residues long: Tryptophan synthase alpha chain (270 aa).

Active-site proton acceptor residues include E51 and D62.

This sequence belongs to the TrpA family. Tetramer of two alpha and two beta chains.

It carries out the reaction (1S,2R)-1-C-(indol-3-yl)glycerol 3-phosphate + L-serine = D-glyceraldehyde 3-phosphate + L-tryptophan + H2O. Its pathway is amino-acid biosynthesis; L-tryptophan biosynthesis; L-tryptophan from chorismate: step 5/5. Functionally, the alpha subunit is responsible for the aldol cleavage of indoleglycerol phosphate to indole and glyceraldehyde 3-phosphate. The chain is Tryptophan synthase alpha chain from Methanothermobacter thermautotrophicus (strain ATCC 29096 / DSM 1053 / JCM 10044 / NBRC 100330 / Delta H) (Methanobacterium thermoautotrophicum).